A 1324-amino-acid polypeptide reads, in one-letter code: Myotubularin-related protein DDB_G0290005 (1324 aa).

Residues 140 to 276 (KYHDNTTPNN…TSSTNGNCST (137 aa)) form a disordered region. Residues 144–180 (NTTPNNNNNNNNNNNNNNNNTNNNNNNNINKSNNSST) show a composition bias toward low complexity. Over residues 181 to 194 (DQLNSFSLEKQPSQ) the composition is skewed to polar residues. A compositionally biased stretch (low complexity) spans 195–222 (NENLNNNNNNNNNNNNGNNNINNNNLMN). A compositionally biased stretch (polar residues) spans 223–247 (SLTQPSTSSRSRLLKSNSTPINLNE). Low complexity predominate over residues 248–276 (SSTSTNSPTLSSTTTTTTTTSSTNGNCST). One can recognise a Myotubularin phosphatase domain in the interval 349–807 (GWLFYDPIEE…KGVQLWSDYF (459 aa)). Substrate is bound by residues 514-515 (NI), 575-581 (CIDGWDR), and Arg621. The active-site Phosphocysteine intermediate is Cys575. Disordered regions lie at residues 624–664 (QSIS…TTTS), 841–1043 (QKKK…QQQE), 1066–1110 (EQQE…QQQT), 1144–1213 (RKQE…LTMP), and 1232–1296 (LHPN…DNTS). 2 stretches are compositionally biased toward low complexity: residues 625–664 (SISS…TTTS) and 852–864 (GASG…SGSS). Over residues 865-882 (SKHHHHHHHHHHHHHHRK) the composition is skewed to basic residues. Residues 883–894 (STDEKDSKEKSS) show a composition bias toward basic and acidic residues. Composition is skewed to low complexity over residues 899-914 (SRTS…STSS) and 927-973 (TITT…TTTP). The segment covering 988–1002 (DKLKSPSGDDIKQEQ) has biased composition (basic and acidic residues). Positions 1005–1024 (MNQFTSQHPNNQMESSSEIN) are enriched in polar residues. A coiled-coil region spans residues 1020 to 1195 (SSEINQQNEQ…LEQQKPKADI (176 aa)). A compositionally biased stretch (low complexity) spans 1025–1043 (QQNEQSQLEQQQEQQQQQE). Polar residues predominate over residues 1079–1090 (PNETITYSMESD). Residues 1091 to 1109 (SQSSISQNQNQLQQQQQQQ) show a composition bias toward low complexity. A compositionally biased stretch (basic and acidic residues) spans 1144-1193 (RKQEKEKRKLEKEKKQKERAERKLEKEKKRDQKEREQKEKELLEQQKPKA). Polar residues predominate over residues 1234-1243 (PNLSDQNSQT). Composition is skewed to low complexity over residues 1244 to 1258 (NSSG…NSPN) and 1265 to 1294 (SNLS…NNDN).

This sequence belongs to the protein-tyrosine phosphatase family. Non-receptor class myotubularin subfamily.

The protein resides in the cytoplasm. Functionally, phosphatase that acts on lipids with a phosphoinositol headgroup. The sequence is that of Myotubularin-related protein DDB_G0290005 from Dictyostelium discoideum (Social amoeba).